The primary structure comprises 385 residues: Aspartate/prephenate aminotransferase (385 aa).

L-aspartate contacts are provided by Gly-39, Trp-125, and Asn-175. Position 234 is an N6-(pyridoxal phosphate)lysine (Lys-234). An L-aspartate-binding site is contributed by Arg-361.

The protein belongs to the class-I pyridoxal-phosphate-dependent aminotransferase family. In terms of assembly, homodimer. It depends on pyridoxal 5'-phosphate as a cofactor.

It localises to the cytoplasm. The enzyme catalyses L-aspartate + 2-oxoglutarate = oxaloacetate + L-glutamate. The catalysed reaction is L-arogenate + oxaloacetate = prephenate + L-aspartate. In terms of biological role, catalyzes the reversible conversion of aspartate and 2-oxoglutarate to glutamate and oxaloacetate. Can also transaminate prephenate in the presence of aspartate. The chain is Aspartate/prephenate aminotransferase (aspC) from Thermus thermophilus (strain ATCC 27634 / DSM 579 / HB8).